Reading from the N-terminus, the 440-residue chain is Tetratricopeptide repeat protein 5 (440 aa).

TPR repeat units lie at residues 7–61 (EEVK…EEVV), 68–98 (AQVLMLTGKALNVTPDYSPKAEELLSKAVKL), 103–130 (VEAWNQLGEVYWKKGDVAAAHTCFSGAL), 136–174 (KVSLQNLSMVLRQLRTDTEDEHSHHVMDSVRQAKLAVQM), and 179–216 (GRSWYILGNSYLSLYFSTGQNPKISQQALSAYAQAEKV). A Nuclear export signal motif is present at residues 13-24 (LQKLQELVDQLY). The residue at position 203 (Ser203) is a Phosphoserine; by ATM. Position 221 is a phosphoserine; by CHEK2 (Ser221). One copy of the TPR 6 repeat lies at 224–253 (PDLHLNRATLHKYEESYGEALEGFSRAAAL). Positions 285–287 (KTK) are mediates interaction with 28S rRNA of ribosome-coding tubulin.

In terms of assembly, interacts with JMY and p300/EP300; the interaction occurs in the nucleus and augments the association between JMY and p300/EP300 in response to DNA damage. Forms a complex with HSF1 and p300/EP300; these interactions augment chromatin-bound HSF1 and p300/EP300 histone acetyltransferase activity, resulting in enhanced heat-shock-responsive transcription. Interacts with PRMT5; the interaction is DNA damage-dependent and promotes PRMT5 interaction with p53/TP53 and subsequent methylation. Interacts with JMY; the interaction occurs in the cytoplasm and results in the inhibition of JYM's nucleation activity. Interacts with ribosome-coding tubulin (via 60S subunit 28S rRNA and protein uL24/RPL26) and the N-terminal of nascent tubulin polypeptide (via alpha-tubulin MREC motif and beta-tubulin MREI motif); these interactions result in tubulin mRNA-targeted degradation. Interacts with ATP5F1B; the interaction occurs in the mitochondria and results in ATP production decrease. Interacts with p53/TP53; the interaction occurs in the mitochondria and results in increased apoptosis. Post-translationally, phosphorylation by ATM kinase induces nuclear accumulation while interfering with nuclear export, and phosphorylation by CHEK2 kinase enhances nuclear stability.

Its subcellular location is the nucleus. It is found in the cytoplasm. The protein resides in the cytoplasmic vesicle. The protein localises to the mitochondrion matrix. Cofactor involved in the regulation of various cellular mechanisms such as actin regulation, autophagy, chromatin regulation and DNA repair. In non-stress conditions, interacts with cofactor JMY in the cytoplasm which prevents JMY's actin nucleation activity and ability to activate the Arp2/3 complex. Acts as a negative regulator of nutrient stress-induced autophagy by preventing JMY's interaction with MAP1LC3B, thereby preventing autophagosome formation. Involves in tubulin autoregulation by promoting its degradation in response to excess soluble tubulin. To do so, associates with the active ribosome near the ribosome exit tunnel and with nascent tubulin polypeptides early during their translation, triggering tubulin mRNA-targeted degradation. Following DNA damage, phosphorylated by DNA damage responsive protein kinases ATM and CHEK2, leading to its nuclear accumulation and stability. Nuclear TTC5/STRAP promotes the assembly of a stress-responsive p53/TP53 coactivator complex, which includes the coactivators JMY and p300, thereby increasing p53/TP53-dependent transcription and apoptosis. Also recruits arginine methyltransferase PRMT5 to p53/TP53 when DNA is damaged, allowing PRMT5 to methylate p53/TP53. In DNA stress conditions, also prevents p53/TP53 degradation by E3 ubiquitin ligase MDM2. Upon heat-shock stress, forms a chromatin-associated complex with heat-shock factor 1 HSF1 and p300/EP300 to stimulate heat-shock-responsive transcription, thereby increasing cell survival. Mitochondrial TTC5/STRAP interacts with ATP synthase subunit beta ATP5F1B which decreased ATP synthase activity and lowers mitochondrial ATP production, thereby regulating cellular respiration and mitochondrial-dependent apoptosis. Mitochondrial TTC5/STRAP also regulates p53/TP53-mediated apoptosis. The sequence is that of Tetratricopeptide repeat protein 5 from Homo sapiens (Human).